We begin with the raw amino-acid sequence, 700 residues long: DNA ligase 2 (700 aa).

NAD(+) is bound by residues 42-46 (DDAYD) and 89-90 (SL). K122 serves as the catalytic N6-AMP-lysine intermediate. R143, E177, K303, and K327 together coordinate NAD(+). C421, C424, C437, and C443 together coordinate Zn(2+). The tract at residues 590–621 (MTEPGATPPRPADTDGADGATAEAPGDGGPLA) is disordered. The BRCT domain maps to 615–700 (GDGGPLAGMK…FAVLVAGLLS (86 aa)).

This sequence belongs to the NAD-dependent DNA ligase family. LigA subfamily. Requires Mg(2+) as cofactor. The cofactor is Mn(2+).

The catalysed reaction is NAD(+) + (deoxyribonucleotide)n-3'-hydroxyl + 5'-phospho-(deoxyribonucleotide)m = (deoxyribonucleotide)n+m + AMP + beta-nicotinamide D-nucleotide.. Functionally, DNA ligase that catalyzes the formation of phosphodiester linkages between 5'-phosphoryl and 3'-hydroxyl groups in double-stranded DNA using NAD as a coenzyme and as the energy source for the reaction. It is essential for DNA replication and repair of damaged DNA. The chain is DNA ligase 2 from Streptomyces coelicolor (strain ATCC BAA-471 / A3(2) / M145).